The sequence spans 121 residues: Ribonuclease P protein component (121 aa).

This sequence belongs to the RnpA family. In terms of assembly, consists of a catalytic RNA component (M1 or rnpB) and a protein subunit.

The enzyme catalyses Endonucleolytic cleavage of RNA, removing 5'-extranucleotides from tRNA precursor.. RNaseP catalyzes the removal of the 5'-leader sequence from pre-tRNA to produce the mature 5'-terminus. It can also cleave other RNA substrates such as 4.5S RNA. The protein component plays an auxiliary but essential role in vivo by binding to the 5'-leader sequence and broadening the substrate specificity of the ribozyme. This Oceanobacillus iheyensis (strain DSM 14371 / CIP 107618 / JCM 11309 / KCTC 3954 / HTE831) protein is Ribonuclease P protein component.